We begin with the raw amino-acid sequence, 356 residues long: sn-glycerol-3-phosphate import ATP-binding protein UgpC (356 aa).

In terms of domain architecture, ABC transporter spans 4 to 235 (LKLQAVTKSW…PASRFVASFI (232 aa)). 37–44 (GPSGCGKS) contributes to the ATP binding site.

The protein belongs to the ABC transporter superfamily. sn-glycerol-3-phosphate importer (TC 3.A.1.1.3) family. The complex is composed of two ATP-binding proteins (UgpC), two transmembrane proteins (UgpA and UgpE) and a solute-binding protein (UgpB).

Its subcellular location is the cell inner membrane. The catalysed reaction is sn-glycerol 3-phosphate(out) + ATP + H2O = sn-glycerol 3-phosphate(in) + ADP + phosphate + H(+). Part of the ABC transporter complex UgpBAEC involved in sn-glycerol-3-phosphate (G3P) import. Responsible for energy coupling to the transport system. The protein is sn-glycerol-3-phosphate import ATP-binding protein UgpC of Salmonella paratyphi A (strain ATCC 9150 / SARB42).